A 139-amino-acid polypeptide reads, in one-letter code: D-ribose pyranase (139 aa).

Catalysis depends on H20, which acts as the Proton donor. Substrate is bound by residues D28, H106, and Y128–N130.

Belongs to the RbsD / FucU family. RbsD subfamily. Homodecamer.

The protein resides in the cytoplasm. It catalyses the reaction beta-D-ribopyranose = beta-D-ribofuranose. The protein operates within carbohydrate metabolism; D-ribose degradation; D-ribose 5-phosphate from beta-D-ribopyranose: step 1/2. Functionally, catalyzes the interconversion of beta-pyran and beta-furan forms of D-ribose. The sequence is that of D-ribose pyranase from Glaesserella parasuis serovar 5 (strain SH0165) (Haemophilus parasuis).